The chain runs to 160 residues: Cytochrome b6-f complex subunit 4 (160 aa).

Transmembrane regions (helical) follow at residues 36–56 (LLYIFPVVIFGTFACVIGLSV), 95–115 (LLGVLLMAAVPAGLLTVPFIE), and 131–151 (TVFLIGTVAAIWLGIGAALPI).

It belongs to the cytochrome b family. PetD subfamily. The 4 large subunits of the cytochrome b6-f complex are cytochrome b6, subunit IV (17 kDa polypeptide, petD), cytochrome f and the Rieske protein, while the 4 small subunits are petG, petL, petM and petN. The complex functions as a dimer.

The protein localises to the plastid. It is found in the chloroplast thylakoid membrane. In terms of biological role, component of the cytochrome b6-f complex, which mediates electron transfer between photosystem II (PSII) and photosystem I (PSI), cyclic electron flow around PSI, and state transitions. This Chlorella vulgaris (Green alga) protein is Cytochrome b6-f complex subunit 4.